The following is a 107-amino-acid chain: MALTKICSSGDLAPGEMLRFEEGPEPILVCNVGGEFFATQDTCSHADWALSEGYLEDDVVECTLHWAKFCVRTGKAKALPACVPLRTFVVKLEGDDVLVDLEGGVTT.

The region spanning 4–99 (TKICSSGDLA…VKLEGDDVLV (96 aa)) is the Rieske domain. 4 residues coordinate [2Fe-2S] cluster: C43, H45, C62, and H65.

It belongs to the bacterial ring-hydroxylating dioxygenase ferredoxin component family. The multicomponent biphenyl dioxygenase system is composed of a ferredoxin reductase (BphA4), a ferredoxin (BphA3), and a terminal oxygenase (BphA1A2). Requires [2Fe-2S] cluster as cofactor.

Its pathway is xenobiotic degradation; biphenyl degradation. Ferredoxin component of the biphenyl dioxygenase system that catalyzes the stereospecific dihydroxylation of the aromatic ring of biphenyl, yielding a dihydrodiol compound. Is likely involved in biphenyl degradation that allows growth of Rhodococcus sp. strain RHA1 on biphenyl as the sole source of carbon and energy. The dioxygenase system can also use naphtalene and 4-chlorobiphenyl (4-CB) as substrates, as well as some polychlorinated biphenyls (PCB) such as 2,2'-dichlorobiphenyl, 2,3-dichlorobiphenyl and 2,5,2'-trichlorobiphenyl. It exhibits weak activity toward dibenzofuran and dibenzo-p-dioxin. Electrons are transferred from NADH to the [2Fe-2S] cluster in BphA1 via FAD of BphA4 and [2Fe-2S] cluster of BphA3. This Rhodococcus jostii (strain RHA1) protein is Biphenyl 2,3-dioxygenase, ferredoxin component.